A 795-amino-acid chain; its full sequence is Antibiotic resistant DNA gyrase subunit B (795 aa).

In terms of domain architecture, Toprim spans 421-536 (SELYLVEGNS…RGYIYIAQPP (116 aa)). Glutamate 427, aspartate 501, and aspartate 503 together coordinate Mg(2+).

This sequence belongs to the type II topoisomerase GyrB family. As to quaternary structure, heterotetramer, composed of two GyrA and two GyrB chains. In the heterotetramer, GyrA contains the active site tyrosine that forms a transient covalent intermediate with DNA, while GyrB binds cofactors and catalyzes ATP hydrolysis. Mg(2+) is required as a cofactor. It depends on Mn(2+) as a cofactor. The cofactor is Ca(2+).

It is found in the cytoplasm. The catalysed reaction is ATP-dependent breakage, passage and rejoining of double-stranded DNA.. Functionally, a type II topoisomerase that negatively supercoils closed circular double-stranded (ds) DNA in an ATP-dependent manner to modulate DNA topology and maintain chromosomes in an underwound state. Negative supercoiling favors strand separation, and DNA replication, transcription, recombination and repair, all of which involve strand separation. Also able to catalyze the interconversion of other topological isomers of dsDNA rings, including catenanes and knotted rings. Type II topoisomerases break and join 2 DNA strands simultaneously in an ATP-dependent manner. The protein is Antibiotic resistant DNA gyrase subunit B of Neisseria gonorrhoeae.